A 151-amino-acid chain; its full sequence is Small ribosomal subunit protein uS13 (151 aa).

The protein belongs to the universal ribosomal protein uS13 family. As to quaternary structure, part of the 30S ribosomal subunit. Forms a loose heterodimer with protein S19. Forms two bridges to the 50S subunit in the 70S ribosome.

Functionally, located at the top of the head of the 30S subunit, it contacts several helices of the 16S rRNA. In the 70S ribosome it contacts the 23S rRNA (bridge B1a) and protein L5 of the 50S subunit (bridge B1b), connecting the 2 subunits; these bridges are implicated in subunit movement. The sequence is that of Small ribosomal subunit protein uS13 from Hyperthermus butylicus (strain DSM 5456 / JCM 9403 / PLM1-5).